The primary structure comprises 1218 residues: Chitin synthase 4 (1218 aa).

Disordered regions lie at residues 1 to 93 (MAEP…PERN) and 132 to 190 (TVSS…RRQK). Positions 14 to 34 (TRDKSHSPYRESPSRRLRDVE) are enriched in basic and acidic residues. Residue Asn-50 is glycosylated (N-linked (GlcNAc...) asparagine). Polar residues-rich tracts occupy residues 71–80 (SNPNPMSQSD) and 133–142 (VSSGSTQQDT). Over residues 175–190 (RKDTRNLTEEEKRRQK) the composition is skewed to basic and acidic residues. A glycan (N-linked (GlcNAc...) asparagine) is linked at Asn-180. Transmembrane regions (helical) follow at residues 200–220 (IWNIYCAVVTFWAPDCLLQCF) and 235–255 (VGLISIILLIAAFVGFLTFGF). Residues Asn-365, Asn-404, and Asn-426 are each glycosylated (N-linked (GlcNAc...) asparagine). The chain crosses the membrane as a helical span at residues 487–507 (VVLYVSLVFILAIVAAKFFLA). 2 disordered regions span residues 548–570 (PKITDPASTVTGSDGRTSKRGSM) and 582–606 (YAVDRRSSRPPPTTMTSQSSNAKLL). Residues 553–562 (PASTVTGSDG) are compositionally biased toward polar residues. N-linked (GlcNAc...) asparagine glycans are attached at residues Asn-617, Asn-903, and Asn-1030. 3 helical membrane passes run 1062–1082 (IGTLVLPAAISFTFYLIIISI), 1087–1107 (VPVIPLVLLALILGLPAILIV), and 1115–1135 (YILWMGIYLLSLPIWNFVLPA). Positions 1188–1218 (QANGSVWNQQPPTRPPSGYGSMHGFEPYRDY) are disordered. Polar residues predominate over residues 1189–1198 (ANGSVWNQQP). N-linked (GlcNAc...) asparagine glycosylation is present at Asn-1190.

This sequence belongs to the chitin synthase family. Class IV subfamily. In terms of processing, maximal activity requires trypsin activation, suggesting a zymogenic nature.

The protein localises to the cell membrane. It catalyses the reaction [(1-&gt;4)-N-acetyl-beta-D-glucosaminyl](n) + UDP-N-acetyl-alpha-D-glucosamine = [(1-&gt;4)-N-acetyl-beta-D-glucosaminyl](n+1) + UDP + H(+). With respect to regulation, activity is stimulated by Mg(2+), and is more inhibited by polyoxin D than by nikkomycin. Its function is as follows. Polymerizes chitin, a structural polymer of the cell wall and septum, by transferring the sugar moiety of UDP-GlcNAc to the non-reducing end of the growing chitin polymer. CHS4 synthesizes a large amount of chitin and appears to play a role in the process of cell separation. CHS4 is particularly well suited for functioning at the higher temperatures associated with its poorly characterized saprophic environment and with human infection. This chain is Chitin synthase 4, found in Exophiala dermatitidis (strain ATCC 34100 / CBS 525.76 / NIH/UT8656) (Black yeast).